The chain runs to 263 residues: Small ribosomal subunit protein eS1 (263 aa).

Positions 235 to 254 (HGEGGGGKREAGDKSERPEG) are enriched in basic and acidic residues. Residues 235-263 (HGEGGGGKREAGDKSERPEGYEPPVQESV) are disordered.

It belongs to the eukaryotic ribosomal protein eS1 family. As to quaternary structure, component of the small ribosomal subunit. Mature ribosomes consist of a small (40S) and a large (60S) subunit. The 40S subunit contains about 33 different proteins and 1 molecule of RNA (18S). The 60S subunit contains about 49 different proteins and 3 molecules of RNA (28S, 5.8S and 5S).

It is found in the cytoplasm. This Bombyx mandarina (Wild silk moth) protein is Small ribosomal subunit protein eS1.